A 361-amino-acid polypeptide reads, in one-letter code: Probable galacturonosyltransferase-like 7 (361 aa).

Residues 1 to 21 (MLWIMRFSGLFSAALVIIVLS) traverse the membrane as a helical; Signal-anchor for type II membrane protein segment. At 22–361 (PSLQSFPPAE…PYDLYGHYSR (340 aa)) the chain is on the lumenal side. A glycan (N-linked (GlcNAc...) asparagine) is linked at asparagine 217.

This sequence belongs to the glycosyltransferase 8 family.

Its subcellular location is the golgi apparatus membrane. It functions in the pathway glycan metabolism; pectin biosynthesis. In terms of biological role, may be involved in pectin and/or xylans biosynthesis in cell walls. This is Probable galacturonosyltransferase-like 7 (GATL7) from Arabidopsis thaliana (Mouse-ear cress).